The sequence spans 94 residues: Cell division protein CrgA (94 aa).

Transmembrane regions (helical) follow at residues 31 to 51 (VWFV…LLVF) and 71 to 91 (LGPW…LLTM).

The protein belongs to the CrgA family.

It is found in the cell membrane. Its function is as follows. Involved in cell division. This is Cell division protein CrgA from Mycobacterium sp. (strain JLS).